Reading from the N-terminus, the 618-residue chain is UvrABC system protein C (618 aa).

Residues 13 to 92 enclose the GIY-YIG domain; the sequence is DKPGVYLMKN…IKKYRPKYNI (80 aa). A UVR domain is found at 204 to 239; sequence LDIVENFKLNMEKAAENLEFEKAAMLRDKINIIEKI.

This sequence belongs to the UvrC family. Interacts with UvrB in an incision complex.

It localises to the cytoplasm. In terms of biological role, the UvrABC repair system catalyzes the recognition and processing of DNA lesions. UvrC both incises the 5' and 3' sides of the lesion. The N-terminal half is responsible for the 3' incision and the C-terminal half is responsible for the 5' incision. The protein is UvrABC system protein C of Clostridium botulinum (strain Kyoto / Type A2).